Here is a 202-residue protein sequence, read N- to C-terminus: Probable nicotinate-nucleotide adenylyltransferase (202 aa).

It belongs to the NadD family.

It carries out the reaction nicotinate beta-D-ribonucleotide + ATP + H(+) = deamido-NAD(+) + diphosphate. The protein operates within cofactor biosynthesis; NAD(+) biosynthesis; deamido-NAD(+) from nicotinate D-ribonucleotide: step 1/1. Catalyzes the reversible adenylation of nicotinate mononucleotide (NaMN) to nicotinic acid adenine dinucleotide (NaAD). This Clostridium perfringens (strain ATCC 13124 / DSM 756 / JCM 1290 / NCIMB 6125 / NCTC 8237 / Type A) protein is Probable nicotinate-nucleotide adenylyltransferase.